The following is a 280-amino-acid chain: MLSAVARGYQGWFHPCARLSVRMSSTGIDRKGVLANRVAVVTGSTSGIGFAIARRLARDGAHVVISSRKQQNVDRAMAKLQGEGLSVAGIVCHVGKAEDREQLVAKALEHCGGVDFLVCSAGVNPLVGSTLGTSEQIWDKILSVNVKSPALLLSQLLPYMENRRGAVILVSSIAAYNPVVALGVYNVSKTALLGLTRTLALELAPKDIRVNCVVPGIIKTDFSKVFHGNESLWKNFKEHHQLQRIGESEDCAGIVSFLCSPDASYVNGENIAVAGYSTRL.

The N-terminal 23 residues, 1-23 (MLSAVARGYQGWFHPCARLSVRM), are a transit peptide targeting the mitochondrion. NAD(+) is bound by residues Ser-46 and Ile-48. An N6-acetyllysine; alternate modification is found at Lys-96. N6-succinyllysine; alternate is present on Lys-96. Position 172 (Ser-172) interacts with substrate. The NAD(+) site is built by Tyr-185 and Lys-189. The Proton acceptor role is filled by Tyr-185. Lys-219 carries the N6-acetyllysine; alternate modification. An N6-succinyllysine; alternate modification is found at Lys-219. An NAD(+)-binding site is contributed by Thr-220. Residue Ser-223 is modified to Phosphoserine. Lys-237 bears the N6-succinyllysine mark.

The protein belongs to the short-chain dehydrogenases/reductases (SDR) family. Directly interacts with MDM2; this interaction occurs in the nucleus and does not target DHRS2 to degradation. Widely expressed, with highest levels in liver and kidney, followed by heart, spleen, skeletal muscle and placenta. In hemopoietic cells, expressed in dendritic cells, but not in monocytes, macrophages, granulocytes, nor in B and T lymphocytes.

It localises to the mitochondrion matrix. The protein localises to the nucleus. NADPH-dependent oxidoreductase which catalyzes the reduction of dicarbonyl compounds. Displays reductase activity in vitro with 3,4-hexanedione, 2,3-heptanedione and 1-phenyl-1,2-propanedione as substrates. May function as a dicarbonyl reductase in the enzymatic inactivation of reactive carbonyls involved in covalent modification of cellular components. Also displays a minor hydroxysteroid dehydrogenase activity toward bile acids such as ursodeoxycholic acid (UDCA) and isoursodeoxycholic acid (isoUDCA), which makes it unlikely to control hormone levels. Doesn't show any activity in vitro with retinoids and sugars as substrates. Attenuates MDM2-mediated p53/TP53 degradation, leading to p53/TP53 stabilization and increased transcription activity, resulting in the accumulation of MDM2 and CDKN1A/p21. Reduces proliferation, migration and invasion of cancer cells and well as the production of ROS in cancer. This is Dehydrogenase/reductase SDR family member 2, mitochondrial from Homo sapiens (Human).